The chain runs to 107 residues: MAQKHEHDTSVITESAPKQKLKKPPLYKVLLHNDNYTTREFVVAVLKEVFHKSETDAVQIMLHVHYNGVGVAGVYTYDVAETKIQTVEAAAQENDMPLRLSMEPEEG.

Residues 1–20 form a disordered region; sequence MAQKHEHDTSVITESAPKQK.

The protein belongs to the ClpS family. Binds to the N-terminal domain of the chaperone ClpA.

Involved in the modulation of the specificity of the ClpAP-mediated ATP-dependent protein degradation. This Myxococcus xanthus (strain DK1622) protein is ATP-dependent Clp protease adapter protein ClpS.